A 264-amino-acid chain; its full sequence is Carbonic anhydrase 7 (264 aa).

The Alpha-carbonic anhydrase domain occupies His-5–Phe-262. Residue His-66 is the Proton donor/acceptor of the active site. His-96, His-98, and His-121 together coordinate Zn(2+). Thr-201–Thr-202 serves as a coordination point for substrate.

This sequence belongs to the alpha-carbonic anhydrase family. Requires Zn(2+) as cofactor.

The protein resides in the cytoplasm. It catalyses the reaction hydrogencarbonate + H(+) = CO2 + H2O. Its function is as follows. Reversible hydration of carbon dioxide. In Mus musculus (Mouse), this protein is Carbonic anhydrase 7 (Ca7).